A 207-amino-acid chain; its full sequence is 2,3-bisphosphoglycerate-dependent phosphoglycerate mutase (207 aa).

Residues 10–17, 23–24, Arg62, 89–92, Lys100, 116–117, and 160–161 each bind substrate; these read RHGQSEWN, TG, ERDY, RR, and GN. His11 (tele-phosphohistidine intermediate) is an active-site residue. The active-site Proton donor/acceptor is Glu89.

It belongs to the phosphoglycerate mutase family. BPG-dependent PGAM subfamily. In terms of assembly, homodimer.

The enzyme catalyses (2R)-2-phosphoglycerate = (2R)-3-phosphoglycerate. Its pathway is carbohydrate degradation; glycolysis; pyruvate from D-glyceraldehyde 3-phosphate: step 3/5. Catalyzes the interconversion of 2-phosphoglycerate and 3-phosphoglycerate. This is 2,3-bisphosphoglycerate-dependent phosphoglycerate mutase from Xanthobacter autotrophicus (strain ATCC BAA-1158 / Py2).